We begin with the raw amino-acid sequence, 467 residues long: Protein PHOSPHATE STARVATION RESPONSE 3 (467 aa).

Residues 227-266 (MSLPVSSCSDQEDLQDARSPAKVQLSSSRSSSGTASCNKP) are disordered. The region spanning 262–322 (SCNKPRLRWT…HLQKYRLAKY (61 aa)) is the HTH myb-type domain. Residues 293–318 (PKGVLKLMKVEGLTIYHIKSHLQKYR) constitute a DNA-binding region (H-T-H motif). Residues 327–337 (KEDKKQEEKKT) are compositionally biased toward basic and acidic residues. Disordered regions lie at residues 327-353 (KEDK…KSAQ) and 400-467 (RESI…VHDE). A compositionally biased stretch (polar residues) spans 402-412 (SISSMTSTTEG). 2 stretches are compositionally biased toward basic and acidic residues: residues 419–428 (PMEKTEDKAE) and 438–467 (RITD…VHDE).

The protein localises to the nucleus. In terms of biological role, transcription factor involved in phosphate starvation signaling. Binds to P1BS, an imperfect palindromic sequence 5'-GNATATNC-3', to promote the expression of inorganic phosphate (Pi) starvation-responsive genes. Functionally redundant with PHR1 and PHR2 in regulating Pi starvation response and Pi homeostasis. This chain is Protein PHOSPHATE STARVATION RESPONSE 3, found in Oryza sativa subsp. indica (Rice).